Reading from the N-terminus, the 467-residue chain is Dimethylamine methyltransferase MtbB3 (467 aa).

Position 356 (Pyl-356) is a non-standard amino acid, pyrrolysine.

Belongs to the dimethylamine methyltransferase family.

The enzyme catalyses Co(I)-[dimethylamine-specific corrinoid protein] + dimethylamine + H(+) = methyl-Co(III)-[dimethylamine-specific corrinoid protein] + methylamine. It participates in one-carbon metabolism; methanogenesis from dimethylamine. Functionally, catalyzes the transfer of a methyl group from dimethylamine to the corrinoid cofactor of MtbC. The polypeptide is Dimethylamine methyltransferase MtbB3 (mtbB3) (Methanosarcina mazei (strain ATCC BAA-159 / DSM 3647 / Goe1 / Go1 / JCM 11833 / OCM 88) (Methanosarcina frisia)).